The following is a 340-amino-acid chain: Protein B17 (340 aa).

This sequence belongs to the orthopoxvirus B17 protein family.

This is Protein B17 from Vaccinia virus (strain Copenhagen) (VACV).